Reading from the N-terminus, the 428-residue chain is Synaptotagmin-1 (428 aa).

At 1 to 67 (MDSLLARVKR…KDKLINEIEN (67 aa)) the chain is on the vesicular side. A disordered region spans residues 16-50 (ALNPAQEGVTGGPDAAGLPDVSTSSPGGGGAGDKL). A helical membrane pass occupies residues 68–92 (LPIWAIVLIIAGSLLFLVCCVYCVC). Over 93 to 428 (RRSCRKRKKK…HTLQEVPEKN (336 aa)) the chain is Cytoplasmic. S123 bears the Phosphoserine; by PRKC2 mark. The phospholipid binding stretch occupies residues 147–395 (STKSEVKLGK…PIGRCVLGCN (249 aa)). C2 domains lie at 153–272 (KLGK…EDWK) and 286–419 (KLGD…AQWH). Residues D184, D190, D242, F243, D244, S247, K248, D250, D317, D323, D377, and D379 each contribute to the Ca(2+) site.

Belongs to the synaptotagmin family. In terms of assembly, binds SNAP25. Isoform 3 binds SNAP25 with higher affinity. Ca(2+) serves as cofactor.

It localises to the cytoplasmic vesicle. It is found in the secretory vesicle. Its subcellular location is the synaptic vesicle membrane. The protein resides in the synapse. Its function is as follows. Acts as inhibitor of neurotransmitter release. Overexpression leads to a decrease in the amplitude of the excitatory postsynaptic potential in dissected cholinergic and glutaminergic neurons while depletion with antisense oligonucleotides leads to an increase. Overexpression of isoform 1 blocks the reversal of synaptic depression by serotonin in sensory neurons. The sequence is that of Synaptotagmin-1 (SYT1) from Aplysia californica (California sea hare).